The primary structure comprises 281 residues: Ethylene-inducing xylanase 1 (281 aa).

The signal sequence occupies residues 1 to 19 (MVSYKAFLITLAAVTRVLT). Residue Asn-23 is glycosylated (N-linked (GlcNAc...) asparagine). Residues 32 to 220 (SGTPSSTGTS…SSGSSDITVG (189 aa)) form the GH11 domain. The Nucleophile role is filled by Glu-116. Catalysis depends on Glu-207, which acts as the Proton donor. Residues 246–281 (TCGALYSQCGGTGFTGSQCCASGTCKYANSYYSQCL) form the CBM1 domain.

This sequence belongs to the glycosyl hydrolase 11 (cellulase G) family.

It catalyses the reaction Endohydrolysis of (1-&gt;4)-beta-D-xylosidic linkages in xylans.. Its pathway is glycan degradation; xylan degradation. In terms of biological role, endo-1,4-beta-xylanase involved in the hydrolysis of xylan, a major structural heterogeneous polysaccharide found in plant biomass representing the second most abundant polysaccharide in the biosphere, after cellulose. May act as an elicitor of plant defense responses in certain plants but does not exhibit any cell death when transiently expressed in N.benthamiana. The polypeptide is Ethylene-inducing xylanase 1 (Botryotinia fuckeliana (strain B05.10) (Noble rot fungus)).